We begin with the raw amino-acid sequence, 99 residues long: Large ribosomal subunit protein eL21 (99 aa).

Positions 1-14 (MPNSNGPLSNSGGK) are enriched in polar residues. Residues 1-38 (MPNSNGPLSNSGGKLQNDPRDRGTSPPQRAIADYDDGE) form a disordered region.

Belongs to the eukaryotic ribosomal protein eL21 family.

This Halobacterium salinarum (strain ATCC 29341 / DSM 671 / R1) protein is Large ribosomal subunit protein eL21.